Here is a 443-residue protein sequence, read N- to C-terminus: Putative cytochrome bd menaquinol oxidase subunit I (443 aa).

9 helical membrane-spanning segments follow: residues 19–39 (IIFA…ELIY), 60–80 (VLLG…ALLW), 93–113 (LPFQ…SIYV), 125–145 (IVAV…ITNV), 176–196 (FFIT…FIVA), 219–239 (ALLL…LNGH), 322–342 (LFNA…IGVV), 357–377 (LIIF…GWIF), and 405–425 (VLFL…VYVL). His182 is a binding site for heme b.

The protein belongs to the cytochrome ubiquinol oxidase subunit 1 family. Requires heme b as cofactor.

Its subcellular location is the cell membrane. In terms of biological role, may have a role in sporulation. Can compensate for the loss of cytochrome aa3. The polypeptide is Putative cytochrome bd menaquinol oxidase subunit I (ythA) (Bacillus subtilis (strain 168)).